We begin with the raw amino-acid sequence, 332 residues long: Casein kinase I isoform 2 (332 aa).

The 272-residue stretch at 11-282 folds into the Protein kinase domain; it reads FRIGQKIGSG…YLKRLFRELF (272 aa). ATP-binding positions include 17-25 and Lys-40; that span reads IGSGSFGEI. Asp-133 functions as the Proton acceptor in the catalytic mechanism. Residues 306 to 332 form a disordered region; that stretch reads EGRADQQQQQQQQQQRRGSEKEDEHPV. Over residues 311–320 the composition is skewed to low complexity; that stretch reads QQQQQQQQQQ. Residues 322–332 are compositionally biased toward basic and acidic residues; that stretch reads RGSEKEDEHPV.

It belongs to the protein kinase superfamily. Ser/Thr protein kinase family. Requires Mg(2+) as cofactor.

The catalysed reaction is L-seryl-[protein] + ATP = O-phospho-L-seryl-[protein] + ADP + H(+). The enzyme catalyses L-threonyl-[protein] + ATP = O-phospho-L-threonyl-[protein] + ADP + H(+). Functionally, serine/threonine protein kinase. May phosphorylate ZC3H11 during unstressed conditions, leading to proteasome-dependent degradation of ZC3H11. This Trypanosoma brucei brucei protein is Casein kinase I isoform 2.